The primary structure comprises 172 residues: Large ribosomal subunit protein uL5 (172 aa).

The protein belongs to the universal ribosomal protein uL5 family. In terms of assembly, part of the 50S ribosomal subunit; contacts the 5S rRNA and probably tRNA. Forms a bridge to the 30S subunit in the 70S ribosome.

Its function is as follows. This is one of the proteins that bind and probably mediate the attachment of the 5S RNA into the large ribosomal subunit, where it forms part of the central protuberance. In the 70S ribosome it contacts protein S13 of the 30S subunit (bridge B1b), connecting the 2 subunits; this bridge is implicated in subunit movement. May contact the P site tRNA; the 5S rRNA and some of its associated proteins might help stabilize positioning of ribosome-bound tRNAs. In Haloferax mediterranei (strain ATCC 33500 / DSM 1411 / JCM 8866 / NBRC 14739 / NCIMB 2177 / R-4) (Halobacterium mediterranei), this protein is Large ribosomal subunit protein uL5.